Consider the following 599-residue polypeptide: Elongation factor 4 (599 aa).

The region spanning 2–184 is the tr-type G domain; it reads KNIRNFSIIA…RLVRDIPPPQ (183 aa). GTP is bound by residues 14–19 and 131–134; these read DHGKST and NKID.

The protein belongs to the TRAFAC class translation factor GTPase superfamily. Classic translation factor GTPase family. LepA subfamily.

It is found in the cell inner membrane. The enzyme catalyses GTP + H2O = GDP + phosphate + H(+). Required for accurate and efficient protein synthesis under certain stress conditions. May act as a fidelity factor of the translation reaction, by catalyzing a one-codon backward translocation of tRNAs on improperly translocated ribosomes. Back-translocation proceeds from a post-translocation (POST) complex to a pre-translocation (PRE) complex, thus giving elongation factor G a second chance to translocate the tRNAs correctly. Binds to ribosomes in a GTP-dependent manner. In Salmonella paratyphi A (strain ATCC 9150 / SARB42), this protein is Elongation factor 4.